Here is a 388-residue protein sequence, read N- to C-terminus: Cell adhesion molecule 4 (388 aa).

The N-terminal stretch at 1–20 is a signal peptide; that stretch reads MGRARRFQWPLLLLWAAAAG. Residues 21–119 form the Ig-like V-type domain; the sequence is PGTGQEVQTE…DTHHQIATLT (99 aa). The Extracellular portion of the chain corresponds to 25-324; sequence QEVQTENVTV…VEAQTSVPYA (300 aa). N-linked (GlcNAc...) asparagine glycosylation is found at Asn-31 and Asn-67. Cystine bridges form between Cys-44–Cys-104, Cys-145–Cys-199, and Cys-245–Cys-291. Ig-like C2-type domains follow at residues 124 to 219 and 224 to 307; these read PENP…YVLD and PTAR…YVLV. Residue Asn-286 is glycosylated (N-linked (GlcNAc...) asparagine). Residues 325 to 345 form a helical membrane-spanning segment; it reads IVGGILALLVFLIICVLVGMV. The Cytoplasmic segment spans residues 346-388; it reads WCSVRQKGSYLTHEASGLDEQGEAREAFLNGGDGHKRKEEFFI. Ser-361 is subject to Phosphoserine.

This sequence belongs to the nectin family. In terms of assembly, monomer and homodimer. In terms of processing, N-glycosylated. In terms of tissue distribution, expressed in the brain and several organs including the kidney and liver.

The protein resides in the membrane. Its function is as follows. Involved in the cell-cell adhesion. Has calcium- and magnesium-independent cell-cell adhesion activity. May have tumor-suppressor activity. The protein is Cell adhesion molecule 4 (Cadm4) of Mus musculus (Mouse).